The following is a 127-amino-acid chain: Large ribosomal subunit protein bL20 (127 aa).

This sequence belongs to the bacterial ribosomal protein bL20 family.

In terms of biological role, binds directly to 23S ribosomal RNA and is necessary for the in vitro assembly process of the 50S ribosomal subunit. It is not involved in the protein synthesizing functions of that subunit. The polypeptide is Large ribosomal subunit protein bL20 (Bifidobacterium animalis subsp. lactis (strain AD011)).